Consider the following 698-residue polypeptide: Ubiquitin-like modifier-activating enzyme ATG7 (698 aa).

The FAP motif signature appears at 11-13 (FAP). Residue lysine 41 forms a Glycyl lysine isopeptide (Lys-Gly) (interchain with G-Cter in ubiquitin) linkage. Cysteine 567 serves as the catalytic Glycyl thioester intermediate. Serine 693 bears the Phosphoserine mark.

Belongs to the ATG7 family. Homodimer. Interacts with ATG3; this interaction is essential for the transfer of ATG8-like proteins's thioester from ATG7 to ATG3 and plays a role in the conjugation of ATG12 to ATG5. Interacts with ATG12. Forms intermediate conjugates with GABARAPL1. Forms intermediate conjugates with ATG8-like proteins such as GABARAP, GABARAPL2 or MAP1LC3A. Interacts with EP300 acetyltransferase. Interacts with FOXO1. Acetylated by EP300. In terms of processing, polyubiquitinated on Lys-41 via 'Lys-63'-linked ubiquitin by TRIM32; this modification positiely regulates ATG8 and ATG12 activating enzyme activity leading to initiation of autophagy under metabolic stress. Widely expressed.

The protein localises to the cytoplasm. Its subcellular location is the preautophagosomal structure. Functionally, E1-like activating enzyme involved in the 2 ubiquitin-like systems required for cytoplasm to vacuole transport (Cvt) and autophagy. Activates ATG12 for its conjugation with ATG5 as well as the ATG8 family proteins for their conjugation with phosphatidylethanolamine. Both systems are needed for the ATG8 association to Cvt vesicles and autophagosomes membranes. Required for autophagic death induced by caspase-8 inhibition. Facilitates LC3-I lipidation with phosphatidylethanolamine to form LC3-II which is found on autophagosomal membranes. Required for mitophagy which contributes to regulate mitochondrial quantity and quality by eliminating the mitochondria to a basal level to fulfill cellular energy requirements and preventing excess ROS production. Modulates p53/TP53 activity to regulate cell cycle and survival during metabolic stress. Also plays a key role in the maintenance of axonal homeostasis, the prevention of axonal degeneration, the maintenance of hematopoietic stem cells, the formation of Paneth cell granules, as well as in adipose differentiation. Plays a role in regulating the liver clock and glucose metabolism by mediating the autophagic degradation of CRY1 (clock repressor) in a time-dependent manner. This Rattus norvegicus (Rat) protein is Ubiquitin-like modifier-activating enzyme ATG7.